An 893-amino-acid chain; its full sequence is Serine/threonine-protein kinase PLK4 (893 aa).

Positions 12–265 constitute a Protein kinase domain; the sequence is FRVGNLLGKG…LSSVLDHPFM (254 aa). Residues 18 to 26 and lysine 41 contribute to the ATP site; that span reads LGKGSFAGV. An N6-acetyllysine mark is found at lysine 45 and lysine 46. Aspartate 136 serves as the catalytic Proton acceptor. Polar residues predominate over residues 349–358; sequence NQEQETSNSG. Residues 349 to 393 are disordered; that stretch reads NQEQETSNSGRGRVIQEAEERPHSRYLRRAHSSDRSETSHGQSRV. Residues 362 to 371 show a composition bias toward basic and acidic residues; sequence VIQEAEERPH. Residues serine 403 and serine 588 each carry the phosphoserine modification. One can recognise a Cryptic POLO box 1 (CPB1) domain in the interval 509–622; sequence TLRSITSPLT…SRFVQLVRSK (114 aa). One can recognise a Cryptic POLO box 2 (CPB2) domain in the interval 623 to 736; the sequence is SPKITYFTRY…GRRPSSTSSP (114 aa). The tract at residues 730–749 is disordered; sequence PSSTSSPKALTPPPPVDPNY. The 79-residue stretch at 809 to 887 folds into the POLO box domain; sequence QLLKSVFVKN…LSSILLMFSN (79 aa).

This sequence belongs to the protein kinase superfamily. Ser/Thr protein kinase family. CDC5/Polo subfamily. In terms of assembly, homodimer. Interacts with CEP152 (via N-terminus). Interacts with CEP78; this interaction may be important for proper PLK4 localization to the centriole and PLK4-induced overduplication of centrioles. Interacts with CEP131. Interacts simultaneously with TENT5C and CEP192. Interacts with TENT5C; this interaction leads to the TENT5C recruitment in the centrosome. Interacts with CEP85; this interaction may be important in cell migration and centriole assembly. Post-translationally, ubiquitinated; leading to its degradation by the proteasome. In terms of processing, tyrosine-phosphorylated by TEC. Acetylation by KAT2A and KAT2B impairs kinase activity by shifting the kinase to an inactive conformation.

It localises to the cytoplasm. The protein resides in the cytoskeleton. It is found in the microtubule organizing center. The protein localises to the centrosome. Its subcellular location is the centriole. It localises to the nucleus. The protein resides in the nucleolus. It is found in the cleavage furrow. It carries out the reaction L-seryl-[protein] + ATP = O-phospho-L-seryl-[protein] + ADP + H(+). It catalyses the reaction L-threonyl-[protein] + ATP = O-phospho-L-threonyl-[protein] + ADP + H(+). Serine/threonine-protein kinase that plays a central role in centriole duplication. Able to trigger procentriole formation on the surface of the parental centriole cylinder, leading to the recruitment of centriole biogenesis proteins such as SASS6, CPAP, CCP110, CEP135 and gamma-tubulin. When overexpressed, it is able to induce centrosome amplification through the simultaneous generation of multiple procentrioles adjoining each parental centriole during S phase. Phosphorylates 'Ser-151' of FBXW5 during the G1/S transition, leading to inhibit FBXW5 ability to ubiquitinate SASS6. Its central role in centriole replication suggests a possible role in tumorigenesis, centrosome aberrations being frequently observed in tumors. Also involved in deuterosome-mediated centriole amplification in multiciliated that can generate more than 100 centrioles. Also involved in trophoblast differentiation by phosphorylating HAND1, leading to disrupt the interaction between HAND1 and MDFIC and activate HAND1. Phosphorylates CDC25C and CHEK2. Required for the recruitment of STIL to the centriole and for STIL-mediated centriole amplification. Phosphorylates CEP131 and PCM1 which is essential for proper organization and integrity of centriolar satellites. The polypeptide is Serine/threonine-protein kinase PLK4 (Bos taurus (Bovine)).